The chain runs to 670 residues: Methionine--tRNA ligase (670 aa).

The short motif at 14–24 (PYANGHLHLGH) is the 'HIGH' region element. Residues C145, C148, C158, and C161 each contribute to the Zn(2+) site. Positions 330-334 (KMSKS) match the 'KMSKS' region motif. Residue K333 coordinates ATP. One can recognise a tRNA-binding domain in the interval 570 to 670 (DFAKVDLRIA…AGALPGMKVK (101 aa)).

It belongs to the class-I aminoacyl-tRNA synthetase family. MetG type 1 subfamily. In terms of assembly, homodimer. It depends on Zn(2+) as a cofactor.

It localises to the cytoplasm. The enzyme catalyses tRNA(Met) + L-methionine + ATP = L-methionyl-tRNA(Met) + AMP + diphosphate. Functionally, is required not only for elongation of protein synthesis but also for the initiation of all mRNA translation through initiator tRNA(fMet) aminoacylation. In Legionella pneumophila (strain Paris), this protein is Methionine--tRNA ligase.